The chain runs to 249 residues: MRFDVLTLFPELFEPFLHAGVTRRAFESGQVDVKLWQLRDFAEDNYKRVDDRPYGGGPGMVMLVEPLERALRAVRAQAGDAAPLIHFTPAGAPMTQKRVRELAAGPGAVLLCGRYEGIDQRFISRHVDEEISLGDFVLSGGELPALALLDAVTRLQPGVLNDAASHQQDSFSDGLLDCPHYSRPERLGEAAADAVPAVLLSGHHARVASWRREQQLRITALRRPDLIDAARAAGALSPADERLLASLQL.

Residues glycine 113 and 133-138 each bind S-adenosyl-L-methionine; that span reads LGDFVL.

This sequence belongs to the RNA methyltransferase TrmD family. Homodimer.

The protein localises to the cytoplasm. The enzyme catalyses guanosine(37) in tRNA + S-adenosyl-L-methionine = N(1)-methylguanosine(37) in tRNA + S-adenosyl-L-homocysteine + H(+). In terms of biological role, specifically methylates guanosine-37 in various tRNAs. The protein is tRNA (guanine-N(1)-)-methyltransferase of Leptothrix cholodnii (strain ATCC 51168 / LMG 8142 / SP-6) (Leptothrix discophora (strain SP-6)).